Reading from the N-terminus, the 274-residue chain is Non-homologous end joining protein Ku (274 aa).

The region spanning 11–195 (ITFGLVNVPV…KYKITPKELS (185 aa)) is the Ku domain.

The protein belongs to the prokaryotic Ku family. In terms of assembly, homodimer. Interacts with LigD.

Functionally, with LigD forms a non-homologous end joining (NHEJ) DNA repair enzyme, which repairs dsDNA breaks with reduced fidelity. Binds linear dsDNA with 5'- and 3'- overhangs but not closed circular dsDNA nor ssDNA. Recruits and stimulates the ligase activity of LigD. The protein is Non-homologous end joining protein Ku of Coxiella burnetii (strain RSA 331 / Henzerling II).